A 555-amino-acid chain; its full sequence is O-fucosyltransferase 20 (555 aa).

Residues 1-58 lie on the Cytoplasmic side of the membrane; sequence MALPKNGGNSSSTKKKVSYISVPSQIINSLSSSSLQSLLVSPKKSSRCTNRFSYRNPR. A helical; Signal-anchor for type II membrane protein transmembrane segment spans residues 59-79; the sequence is IWFLTLFLVSLFGMLKLGLNV. Over 80 to 555 the chain is Lumenal; sequence DPISLPFSRY…MCSDRRQQQQ (476 aa). The disordered stretch occupies residues 110 to 130; that stretch reads KNDTQSSSSSEHRKNETLPTE. 2 N-linked (GlcNAc...) asparagine glycosylation sites follow: Asn-111 and Asn-124. 330 to 332 contacts substrate; the sequence is HLR. 2 N-linked (GlcNAc...) asparagine glycosylation sites follow: Asn-371 and Asn-503. Residues 525–555 form a disordered region; that stretch reads QPELRTGRGGKDVTKHPVSECMCSDRRQQQQ. Basic and acidic residues predominate over residues 529 to 555; sequence RTGRGGKDVTKHPVSECMCSDRRQQQQ.

This sequence belongs to the glycosyltransferase GT106 family. Highly expressed in embryogenic microspore and in vegetative tissues.

The protein localises to the golgi apparatus membrane. It participates in glycan metabolism. May play a role in the biosynthesis of matrix polysaccharides and contribute to the biomechanics and development of the plant cell wall. This chain is O-fucosyltransferase 20, found in Brassica napus (Rape).